The primary structure comprises 196 residues: GTP cyclohydrolase 1 (196 aa).

Cys85, His88, and Cys156 together coordinate Zn(2+).

It belongs to the GTP cyclohydrolase I family. Toroid-shaped homodecamer, composed of two pentamers of five dimers.

The catalysed reaction is GTP + H2O = 7,8-dihydroneopterin 3'-triphosphate + formate + H(+). It participates in cofactor biosynthesis; 7,8-dihydroneopterin triphosphate biosynthesis; 7,8-dihydroneopterin triphosphate from GTP: step 1/1. In Bacteroides thetaiotaomicron (strain ATCC 29148 / DSM 2079 / JCM 5827 / CCUG 10774 / NCTC 10582 / VPI-5482 / E50), this protein is GTP cyclohydrolase 1.